A 381-amino-acid chain; its full sequence is Succinyl-diaminopimelate desuccinylase (381 aa).

H71 is a binding site for Zn(2+). Residue D73 is part of the active site. D104 provides a ligand contact to Zn(2+). E138 acts as the Proton acceptor in catalysis. Zn(2+) contacts are provided by E139, E167, and H353.

Belongs to the peptidase M20A family. DapE subfamily. Homodimer. Zn(2+) serves as cofactor. It depends on Co(2+) as a cofactor.

The catalysed reaction is N-succinyl-(2S,6S)-2,6-diaminopimelate + H2O = (2S,6S)-2,6-diaminopimelate + succinate. It participates in amino-acid biosynthesis; L-lysine biosynthesis via DAP pathway; LL-2,6-diaminopimelate from (S)-tetrahydrodipicolinate (succinylase route): step 3/3. Functionally, catalyzes the hydrolysis of N-succinyl-L,L-diaminopimelic acid (SDAP), forming succinate and LL-2,6-diaminopimelate (DAP), an intermediate involved in the bacterial biosynthesis of lysine and meso-diaminopimelic acid, an essential component of bacterial cell walls. The polypeptide is Succinyl-diaminopimelate desuccinylase (Shewanella halifaxensis (strain HAW-EB4)).